Consider the following 3508-residue polypeptide: WD repeat and FYVE domain-containing protein 3 (3508 aa).

2 positions are modified to phosphoserine: serine 1942 and serine 2277. Disordered stretches follow at residues 2279–2303 (FGLS…SPSP) and 2441–2504 (SSEG…EKTD). The tract at residues 2284 to 2963 (LTGSRRNRKE…PHPPKRVRSR (680 aa)) is sufficient for translocalization to p62 bodies/ALIS. Residues 2450-2459 (EPEHGEDTIA) show a composition bias toward basic and acidic residues. Phosphoserine is present on serine 2474. One can recognise a BEACH-type PH domain in the interval 2513-2638 (EEGEKIQHMY…IRNKVYQRFL (126 aa)). The interval 2568-3508 (MHEPIIPRGA…RGAEDGPRNC (941 aa)) is interaction with SQSTM1. Positions 2665-2958 (GLLSTLVGEK…QLFKKPHPPK (294 aa)) constitute a BEACH domain. Residues 2963-3508 (RLNGDNIGIS…RGAEDGPRNC (546 aa)) are interaction with ATG5. 4 WD repeats span residues 3059–3097 (SEWG…EKAK), 3107–3146 (GHTD…FLTQ), 3149–3188 (GHRA…VSVN), and 3192–3236 (GRSQ…VPET). Positions 3254 to 3317 (AQIGQQAQDD…SGSDDSRRWS (64 aa)) are disordered. Over residues 3261-3272 (QDDDSSDSETEE) the composition is skewed to acidic residues. Phosphoserine is present on residues serine 3317 and serine 3321. The LIR signature appears at 3326–3331 (DGFIFV). The stretch at 3390–3429 (THPAEVTALGVSKDHSRILVGDSRGRVFSWSVSDQPGRSA) is one WD 5 repeat. The segment at 3436–3496 (DEGGDSCSGC…VCQNCYYSLQ (61 aa)) adopts an FYVE-type zinc-finger fold. Residues cysteine 3442, cysteine 3445, cysteine 3458, cysteine 3461, cysteine 3466, cysteine 3469, cysteine 3488, and cysteine 3491 each coordinate Zn(2+).

In terms of assembly, directly interacts with ATG5 and associates with the ATG12-ATG5-ATG16L complex. Interacts with p62/SQSTM1. Directly interacts with GABARAP, GABARAPL1 and GABARAPL2; the interaction with GABARAP is required for WDFY3 recruitment to MAP1LC3B-positive p62/SQSTM1 bodies. Weakly interacts with MAP1LC3C; this interaction is direct. Does not interact with MAP1LC3A, nor MAP1LC3B. Interacts with TRAF6. In terms of tissue distribution, widely expressed, with high levels in the brain (at protein level). In the brain, expressed by both neuronal and non-neuronal cells. Expressed in bones, in the periosteum, cartilage, growth plate, trabeculae of the primary spongiosa, and scattered hematopoietic cells within the medullary cavity. Tends to be expressed at lower levels in the hypertrophic zone compared to trabeculae. Expressed in osteoblasts, osteoclasts and bone-marrow derived macrophages.

The protein resides in the nucleus. The protein localises to the cytoplasm. Its subcellular location is the cytosol. It is found in the PML body. It localises to the membrane. The protein resides in the perikaryon. The protein localises to the cell projection. Its subcellular location is the axon. Functionally, required for selective macroautophagy (aggrephagy). Acts as an adapter protein by linking specific proteins destined for degradation to the core autophagic machinery members, such as the ATG5-ATG12-ATG16L E3-like ligase, SQSTM1 and LC3. Involved in the formation and autophagic degradation of cytoplasmic ubiquitin-containing inclusions (p62 bodies, ALIS/aggresome-like induced structures). Important for normal brain development. Essential for the formation of axonal tracts throughout the brain and spinal cord, including the formation of the major forebrain commissures. Involved in the ability of neural cells to respond to guidance cues. Required for cortical neurons to respond to the trophic effects of netrin-1/NTN1. Regulates Wnt signaling through the removal of DVL3 aggregates, likely in an autophagy-dependent manner. This process may be important for the determination of brain size during embryonic development. May regulate osteoclastogenesis by acting on the TNFSF11/RANKL - TRAF6 pathway. After cytokinetic abscission, involved in midbody remnant degradation. In vitro strongly binds to phosphatidylinositol 3-phosphate (PtdIns3P). The chain is WD repeat and FYVE domain-containing protein 3 (Wdfy3) from Mus musculus (Mouse).